A 297-amino-acid chain; its full sequence is Large ribosomal subunit protein uL10 (297 aa).

It belongs to the universal ribosomal protein uL10 family. In terms of assembly, part of the 50S ribosomal subunit. Forms part of the ribosomal stalk which helps the ribosome interact with GTP-bound translation factors. Forms a heptameric L10(L12)2(L12)2(L12)2 complex, where L10 forms an elongated spine to which the L12 dimers bind in a sequential fashion.

Its function is as follows. Forms part of the ribosomal stalk, playing a central role in the interaction of the ribosome with GTP-bound translation factors. This is Large ribosomal subunit protein uL10 from Methanococcus voltae.